A 346-amino-acid polypeptide reads, in one-letter code: Very-long-chain 3-oxoacyl-CoA reductase (346 aa).

A helical transmembrane segment spans residues 26 to 46 (TASVLLVAGGWFVVSRVWTFL). NADP(+) is bound by residues isoleucine 71, aspartate 126, aspartate 134, asparagine 153, tyrosine 220, lysine 224, isoleucine 253, and serine 255. Catalysis depends on tyrosine 220, which acts as the Proton donor. Catalysis depends on lysine 224, which acts as the Lowers pKa of active site Tyr.

It belongs to the short-chain dehydrogenases/reductases (SDR) family.

Its subcellular location is the endoplasmic reticulum membrane. The enzyme catalyses a very-long-chain (3R)-3-hydroxyacyl-CoA + NADP(+) = a very-long-chain 3-oxoacyl-CoA + NADPH + H(+). It participates in lipid metabolism; fatty acid biosynthesis. In terms of biological role, component of the microsomal membrane bound fatty acid elongation system, which produces the 26-carbon very long-chain fatty acids (VLCFA) from palmitate. Catalyzes the reduction of the 3-ketoacyl-CoA intermediate that is formed in each cycle of fatty acid elongation. VLCFAs serve as precursors for ceramide and sphingolipids. In Emericella nidulans (strain FGSC A4 / ATCC 38163 / CBS 112.46 / NRRL 194 / M139) (Aspergillus nidulans), this protein is Very-long-chain 3-oxoacyl-CoA reductase.